Consider the following 251-residue polypeptide: Arginine and glutamate-rich protein 1-A (251 aa).

Positions 1-48 are enriched in basic residues; that stretch reads MGRSRSRSSSRSKHSKHSRKRSRSKSKSKKRSRSKEPKRNRRSRSRSG. A necessary and sufficient for RNA binding region spans residues 1 to 53; that stretch reads MGRSRSRSSSRSKHSKHSRKRSRSKSKSKKRSRSKEPKRNRRSRSRSGSRRDR. Disordered regions lie at residues 1–92 and 215–251; these read MGRS…ERQR and RMKL…KATE. Composition is skewed to basic and acidic residues over residues 49-63, 71-92, and 215-231; these read SRRD…RTDM, RNND…ERQR, and RMKL…EEQK. The necessary and sufficient for transcriptional regulation stretch occupies residues 54–251; sequence GGSPPDRTDM…RLSFSLKATE (198 aa).

This sequence belongs to the ARGLU1 family.

The protein localises to the nucleus. Its subcellular location is the nucleus speckle. The protein resides in the chromosome. Its function is as follows. Dual function regulator of gene expression; regulator of transcription and modulator of alternative splicing. General coactivator of nuclear receptor-induced gene expression. This chain is Arginine and glutamate-rich protein 1-A (arglu1a), found in Danio rerio (Zebrafish).